The chain runs to 652 residues: Carboxypeptidase S1 homolog A (652 aa).

The N-terminal stretch at 1–19 (MRLAASIAVALPVIGAASA) is a signal peptide. Cysteines 50 and 121 form a disulfide. N-linked (GlcNAc...) asparagine glycans are attached at residues N77, N132, N161, N168, N184, and N202. The active site involves S238. N-linked (GlcNAc...) asparagine glycans are attached at residues N260, N299, N347, and N410. Cystine bridges form between C325–C361 and C332–C354. D458 is an active-site residue. C461 is a substrate binding site. Residues N474, N492, and N505 are each glycosylated (N-linked (GlcNAc...) asparagine). H516 is an active-site residue. E517 is a binding site for substrate. N-linked (GlcNAc...) asparagine glycosylation occurs at N594. Positions 608–628 (AASKGNPPPTTTSSPTASPTA) are disordered. Residues 618–628 (TTSSPTASPTA) are compositionally biased toward low complexity. G629 is lipidated: GPI-anchor amidated glycine. Residues 630-652 (SAMLKAPVAMLAISALTVLAFYL) constitute a propeptide, removed in mature form.

It belongs to the peptidase S10 family.

The protein resides in the cell membrane. The enzyme catalyses Preferential release of a C-terminal arginine or lysine residue.. Extracellular serine carboxypeptidase that contributes to pathogenicity. In Arthroderma benhamiae (strain ATCC MYA-4681 / CBS 112371) (Trichophyton mentagrophytes), this protein is Carboxypeptidase S1 homolog A (SCPA).